The chain runs to 217 residues: tRNA (guanine-N(7)-)-methyltransferase (217 aa).

Residues Glu44, Asp69, Asp96, and Asp118 each contribute to the S-adenosyl-L-methionine site. Residue Asp118 is part of the active site. Substrate is bound at residue Lys122. An interaction with RNA region spans residues 124-129 (RHEKRR). Residues Asp154 and 193-196 (TEYE) each bind substrate.

Belongs to the class I-like SAM-binding methyltransferase superfamily. TrmB family.

The enzyme catalyses guanosine(46) in tRNA + S-adenosyl-L-methionine = N(7)-methylguanosine(46) in tRNA + S-adenosyl-L-homocysteine. Its pathway is tRNA modification; N(7)-methylguanine-tRNA biosynthesis. Its function is as follows. Catalyzes the formation of N(7)-methylguanine at position 46 (m7G46) in tRNA. This is tRNA (guanine-N(7)-)-methyltransferase from Lactococcus lactis subsp. lactis (strain IL1403) (Streptococcus lactis).